We begin with the raw amino-acid sequence, 350 residues long: tRNA uridine(34) hydroxylase (350 aa).

Residues 146 to 240 (DDPDAVFIDM…YARRAREQGL (95 aa)) form the Rhodanese domain. Cys-200 acts as the Cysteine persulfide intermediate in catalysis. Residues 319 to 328 (RRRRAGRENG) are compositionally biased toward basic and acidic residues. The segment at 319–350 (RRRRAGRENGNKIFNKSRGRLNSKLSIPDPAE) is disordered.

This sequence belongs to the TrhO family.

It catalyses the reaction uridine(34) in tRNA + AH2 + O2 = 5-hydroxyuridine(34) in tRNA + A + H2O. Catalyzes oxygen-dependent 5-hydroxyuridine (ho5U) modification at position 34 in tRNAs. This chain is tRNA uridine(34) hydroxylase, found in Salmonella agona (strain SL483).